Reading from the N-terminus, the 214-residue chain is Uridine kinase (214 aa).

15–22 (GASASGKS) provides a ligand contact to ATP.

The protein belongs to the uridine kinase family.

It is found in the cytoplasm. The catalysed reaction is uridine + ATP = UMP + ADP + H(+). The enzyme catalyses cytidine + ATP = CMP + ADP + H(+). Its pathway is pyrimidine metabolism; CTP biosynthesis via salvage pathway; CTP from cytidine: step 1/3. The protein operates within pyrimidine metabolism; UMP biosynthesis via salvage pathway; UMP from uridine: step 1/1. The sequence is that of Uridine kinase from Aeromonas salmonicida (strain A449).